The primary structure comprises 425 residues: Glutamyl-tRNA reductase (425 aa).

Residues Thr-49–Arg-52, Ser-107, Glu-112–Gln-114, and Gln-118 contribute to the substrate site. Catalysis depends on Cys-50, which acts as the Nucleophile. Gly-187 to Ile-192 provides a ligand contact to NADP(+).

The protein belongs to the glutamyl-tRNA reductase family. In terms of assembly, homodimer.

The catalysed reaction is (S)-4-amino-5-oxopentanoate + tRNA(Glu) + NADP(+) = L-glutamyl-tRNA(Glu) + NADPH + H(+). Its pathway is porphyrin-containing compound metabolism; protoporphyrin-IX biosynthesis; 5-aminolevulinate from L-glutamyl-tRNA(Glu): step 1/2. Catalyzes the NADPH-dependent reduction of glutamyl-tRNA(Glu) to glutamate 1-semialdehyde (GSA). The polypeptide is Glutamyl-tRNA reductase (Pseudomonas syringae pv. syringae (strain B728a)).